A 119-amino-acid polypeptide reads, in one-letter code: Basic phospholipase A2 notechis II-5 (119 aa).

Disulfide bonds link cysteine 11/cysteine 71, cysteine 27/cysteine 118, cysteine 29/cysteine 45, cysteine 44/cysteine 99, cysteine 51/cysteine 92, cysteine 60/cysteine 85, and cysteine 78/cysteine 90. Tyrosine 28, glycine 30, and glycine 32 together coordinate Ca(2+). Residue histidine 48 is part of the active site. Aspartate 49 contacts Ca(2+). The active site involves aspartate 93.

This sequence belongs to the phospholipase A2 family. Group I subfamily. D49 sub-subfamily. It depends on Ca(2+) as a cofactor. Expressed by the venom gland.

The protein resides in the secreted. It carries out the reaction a 1,2-diacyl-sn-glycero-3-phosphocholine + H2O = a 1-acyl-sn-glycero-3-phosphocholine + a fatty acid + H(+). Functionally, snake venom phospholipase A2 (PLA2) that inhibits neuromuscular transmission by blocking acetylcholine release from the nerve termini. Notechis II-5 is less toxic than notexin but has a higher specific phospholipase activity. PLA2 catalyzes the calcium-dependent hydrolysis of the 2-acyl groups in 3-sn-phosphoglycerides. The chain is Basic phospholipase A2 notechis II-5 from Notechis scutatus scutatus (Mainland tiger snake).